The following is a 125-amino-acid chain: MLFRRLFSSSVIVQAASKTSLRKTVKPSEEIPDVNAFLGRIGRKCDEFTDTYENKWDNLFTWGGPVLKEKGIPIQQRRYILNQVEKLRKGEEIKEIKKGKKSFFGGERKRKETIAKWRAEQRNAE.

The transit peptide at 1 to 23 (MLFRRLFSSSVIVQAASKTSLRK) directs the protein to the mitochondrion.

Belongs to the mitochondrion-specific ribosomal protein mS41 family.

Its subcellular location is the mitochondrion. Functionally, involved in telomere length regulation. The polypeptide is Small ribosomal subunit protein mS41 (FYV4) (Kluyveromyces lactis (strain ATCC 8585 / CBS 2359 / DSM 70799 / NBRC 1267 / NRRL Y-1140 / WM37) (Yeast)).